The primary structure comprises 447 residues: 1-aminocyclopropane-1-carboxylate synthase 7 (447 aa).

Substrate-binding residues include Glu61 and Tyr100. N6-(pyridoxal phosphate)lysine is present on Lys285.

Belongs to the class-I pyridoxal-phosphate-dependent aminotransferase family. In terms of assembly, homodimer and heterodimer. In vivo, the relevance of heterodimerization with other ACS enzymes is however unsure. Interacts with XBAT32. It depends on pyridoxal 5'-phosphate as a cofactor. In terms of processing, ubiquitinated by XBAT32. Ubiquitination probably leads to its subsequent degradation, thus controlling ethylene production. Expressed in roots.

It catalyses the reaction S-adenosyl-L-methionine = 1-aminocyclopropane-1-carboxylate + S-methyl-5'-thioadenosine + H(+). The protein operates within alkene biosynthesis; ethylene biosynthesis via S-adenosyl-L-methionine; ethylene from S-adenosyl-L-methionine: step 1/2. 1-aminocyclopropane-1-carboxylate synthase (ACS) enzymes catalyze the conversion of S-adenosyl-L-methionine (SAM) into 1-aminocyclopropane-1-carboxylate (ACC), a direct precursor of ethylene. The sequence is that of 1-aminocyclopropane-1-carboxylate synthase 7 (ACS7) from Arabidopsis thaliana (Mouse-ear cress).